The primary structure comprises 144 residues: Large ribosomal subunit protein uL16 (144 aa).

It belongs to the universal ribosomal protein uL16 family. Part of the 50S ribosomal subunit.

Binds 23S rRNA and is also seen to make contacts with the A and possibly P site tRNAs. The polypeptide is Large ribosomal subunit protein uL16 (Lactiplantibacillus plantarum (strain ATCC BAA-793 / NCIMB 8826 / WCFS1) (Lactobacillus plantarum)).